A 261-amino-acid polypeptide reads, in one-letter code: Ribosome biogenesis protein nsa2 (261 aa).

Basic and acidic residues-rich tracts occupy residues 1-36 (MPQN…HKQS) and 66-82 (KQHE…EKDP). 2 disordered regions span residues 1-44 (MPQN…NLRG) and 64-97 (AIKQ…SNPT). A Nuclear localization signal motif is present at residues 15–22 (GKRLDTEE).

This sequence belongs to the eukaryotic ribosomal protein eS8 family. Ribosome biogenesis protein NSA2 subfamily. As to quaternary structure, component of the pre-66S ribosomal particle. Interacts with nop7 and rrp1. Interacts with rsa4 (via WD repeats).

Its subcellular location is the nucleus. It localises to the nucleolus. Functionally, involved in the biogenesis of the 60S ribosomal subunit. May play a part in the quality control of pre-60S particles. This is Ribosome biogenesis protein nsa2 (rbg-52) from Neurospora crassa (strain ATCC 24698 / 74-OR23-1A / CBS 708.71 / DSM 1257 / FGSC 987).